We begin with the raw amino-acid sequence, 130 residues long: Hypocretin neuropeptide precursor (130 aa).

The signal sequence occupies residues 1–32 (MNPPSTKVPWAAVTLLLLLLLPPALLSPGAAA). Gln33 carries the post-translational modification Pyrrolidone carboxylic acid. 2 disulfide bridges follow: Cys38–Cys44 and Cys39–Cys46. Leu65 bears the Leucine amide mark. Met96 carries the methionine amide modification. A propeptide spans 97–130 (GRRAGAEPAPRPCPGRRCPVVAVPSAAPGGRSGV) (removed in mature form).

This sequence belongs to the orexin family. In terms of processing, specific enzymatic cleavages at paired basic residues yield the different active peptides.

It localises to the rough endoplasmic reticulum. Its subcellular location is the cytoplasmic vesicle. It is found in the synapse. Functionally, neuropeptides that play a significant role in the regulation of food intake and sleep-wakefulness, possibly by coordinating the complex behavioral and physiologic responses of these complementary homeostatic functions. A broader role in the homeostatic regulation of energy metabolism, autonomic function, hormonal balance and the regulation of body fluids, is also suggested. In terms of biological role, binds to orexin receptors HCRTR1/OX1R and HCRTR2/OX2R with a high affinity. Stimulates food intake. Modulates pituitary luteinizing hormone secretion in an ovarian steroid-dependent manner. Binds to orexin receptor HCRTR2/OX2R only. Stimulates food intake. Modulates pituitary luteinizing hormone secretion in an ovarian steroid-dependent manner. The sequence is that of Hypocretin neuropeptide precursor (HCRT) from Canis lupus familiaris (Dog).